Here is a 1222-residue protein sequence, read N- to C-terminus: ATP-dependent helicase/nuclease subunit A (1222 aa).

The UvrD-like helicase ATP-binding domain maps to 39-495 (QKRTAQQIEA…ILLKENFRSQ (457 aa)). 60 to 67 (ASAGSGKT) lines the ATP pocket. The 287-residue stretch at 524–810 (QLIAGSHAQT…NLMTIHKSKG (287 aa)) folds into the UvrD-like helicase C-terminal domain.

Belongs to the helicase family. AddA subfamily. In terms of assembly, heterodimer of AddA and AddB/RexB. The cofactor is Mg(2+).

The enzyme catalyses Couples ATP hydrolysis with the unwinding of duplex DNA by translocating in the 3'-5' direction.. The catalysed reaction is ATP + H2O = ADP + phosphate + H(+). The heterodimer acts as both an ATP-dependent DNA helicase and an ATP-dependent, dual-direction single-stranded exonuclease. Recognizes the chi site generating a DNA molecule suitable for the initiation of homologous recombination. The AddA nuclease domain is required for chi fragment generation; this subunit has the helicase and 3' -&gt; 5' nuclease activities. This chain is ATP-dependent helicase/nuclease subunit A, found in Streptococcus pyogenes serotype M4 (strain MGAS10750).